The primary structure comprises 149 residues: Transcriptional repressor NrdR (149 aa).

A zinc finger lies at 3-34; that stretch reads CPFCATDDTKVVDSRLTADGYQIRRRRECPVC. One can recognise an ATP-cone domain in the interval 49–139; it reads PHIVKNNGSR…VYLSFDDVEE (91 aa).

This sequence belongs to the NrdR family. It depends on Zn(2+) as a cofactor.

Negatively regulates transcription of bacterial ribonucleotide reductase nrd genes and operons by binding to NrdR-boxes. This Glaesserella parasuis serovar 5 (strain SH0165) (Haemophilus parasuis) protein is Transcriptional repressor NrdR.